The chain runs to 400 residues: Phosphoglycerate kinase (400 aa).

Residues 22–24 (DFN), Arg38, 61–64 (HLGR), Arg119, and Arg152 contribute to the substrate site. ATP contacts are provided by residues Lys205, Gly296, Glu327, and 353–356 (GGDT).

This sequence belongs to the phosphoglycerate kinase family. As to quaternary structure, monomer.

The protein localises to the cytoplasm. It catalyses the reaction (2R)-3-phosphoglycerate + ATP = (2R)-3-phospho-glyceroyl phosphate + ADP. It functions in the pathway carbohydrate degradation; glycolysis; pyruvate from D-glyceraldehyde 3-phosphate: step 2/5. The chain is Phosphoglycerate kinase from Campylobacter jejuni subsp. jejuni serotype O:2 (strain ATCC 700819 / NCTC 11168).